The chain runs to 52 residues: Large ribosomal subunit protein eL40 (52 aa).

This sequence belongs to the eukaryotic ribosomal protein eL40 family.

The sequence is that of Large ribosomal subunit protein eL40 from Thermococcus onnurineus (strain NA1).